Consider the following 208-residue polypeptide: FMN-dependent NADH:quinone oxidoreductase (208 aa).

FMN is bound by residues 17 to 19, 99 to 102, and 143 to 146; these read SNS, MWNL, and SRGG.

This sequence belongs to the azoreductase type 1 family. As to quaternary structure, homodimer. Requires FMN as cofactor.

The enzyme catalyses 2 a quinone + NADH + H(+) = 2 a 1,4-benzosemiquinone + NAD(+). It catalyses the reaction N,N-dimethyl-1,4-phenylenediamine + anthranilate + 2 NAD(+) = 2-(4-dimethylaminophenyl)diazenylbenzoate + 2 NADH + 2 H(+). Its function is as follows. Quinone reductase that provides resistance to thiol-specific stress caused by electrophilic quinones. In terms of biological role, also exhibits azoreductase activity. Catalyzes the reductive cleavage of the azo bond in aromatic azo compounds to the corresponding amines. In Staphylococcus carnosus (strain TM300), this protein is FMN-dependent NADH:quinone oxidoreductase.